The chain runs to 138 residues: Ergosterol biosynthetic protein 28 (138 aa).

Residues 17–33 traverse the membrane as a helical segment; sequence LPYWLLFISVVSIFNSV. Residue asparagine 40 is glycosylated (N-linked (GlcNAc...) asparagine). Helical transmembrane passes span 56 to 75, 87 to 107, and 114 to 131; these read LSAR…RFYG, LTQF…LYFG, and GLSG…WMYL.

It belongs to the ERG28 family. As to quaternary structure, heterotetramer of ERG25, ERG26, ERG27 and ERG28. ERG28 acts as a scaffold to tether ERG27 and other 4,4-demethylation-related enzymes, forming a demethylation enzyme complex, in the endoplasmic reticulum. Interacts with ERG25, ERG26 and ERG27. Also interacts with ERG1, ERG3, ERG5, ERG6 and ERG11.

It is found in the endoplasmic reticulum membrane. Functionally, part of the third module of ergosterol biosynthesis pathway that includes the late steps of the pathway. ERG28 has a role as a scaffold to help anchor the catalytic components of the C-4 demethylation complex ERG25, ERG26 and ERG27 to the endoplasmic reticulum. The third module or late pathway involves the ergosterol synthesis itself through consecutive reactions that mainly occur in the endoplasmic reticulum (ER) membrane. Firstly, the squalene synthase ERG9 catalyzes the condensation of 2 farnesyl pyrophosphate moieties to form squalene, which is the precursor of all steroids. Squalene synthase is crucial for balancing the incorporation of farnesyl diphosphate (FPP) into sterol and nonsterol isoprene synthesis. Secondly, the squalene epoxidase ERG1 catalyzes the stereospecific oxidation of squalene to (S)-2,3-epoxysqualene, which is considered to be a rate-limiting enzyme in steroid biosynthesis. Then, the lanosterol synthase ERG7 catalyzes the cyclization of (S)-2,3 oxidosqualene to lanosterol, a reaction that forms the sterol core. In the next steps, lanosterol is transformed to zymosterol through a complex process involving various demethylation, reduction and desaturation reactions. The lanosterol 14-alpha-demethylase ERG11 (also known as CYP51) catalyzes C14-demethylation of lanosterol to produce 4,4'-dimethyl cholesta-8,14,24-triene-3-beta-ol, which is critical for ergosterol biosynthesis. The C-14 reductase ERG24 reduces the C14=C15 double bond of 4,4-dimethyl-cholesta-8,14,24-trienol to produce 4,4-dimethyl-cholesta-8,24-dienol. 4,4-dimethyl-cholesta-8,24-dienol is substrate of the C-4 demethylation complex ERG25-ERG26-ERG27 in which ERG25 catalyzes the three-step monooxygenation required for the demethylation of 4,4-dimethyl and 4alpha-methylsterols, ERG26 catalyzes the oxidative decarboxylation that results in a reduction of the 3-beta-hydroxy group at the C-3 carbon to an oxo group, and ERG27 is responsible for the reduction of the keto group on the C-3. ERG28 has a role as a scaffold to help anchor ERG25, ERG26 and ERG27 to the endoplasmic reticulum and ERG29 regulates the activity of the iron-containing C4-methylsterol oxidase ERG25. Then, the sterol 24-C-methyltransferase ERG6 catalyzes the methyl transfer from S-adenosyl-methionine to the C-24 of zymosterol to form fecosterol. The C-8 sterol isomerase ERG2 catalyzes the reaction which results in unsaturation at C-7 in the B ring of sterols and thus converts fecosterol to episterol. The sterol-C5-desaturase ERG3 then catalyzes the introduction of a C-5 double bond in the B ring to produce 5-dehydroepisterol. The C-22 sterol desaturase ERG5 further converts 5-dehydroepisterol into ergosta-5,7,22,24(28)-tetraen-3beta-ol by forming the C-22(23) double bond in the sterol side chain. Finally, ergosta-5,7,22,24(28)-tetraen-3beta-ol is substrate of the C-24(28) sterol reductase ERG4 to produce ergosterol. In Candida albicans (strain SC5314 / ATCC MYA-2876) (Yeast), this protein is Ergosterol biosynthetic protein 28.